A 242-amino-acid polypeptide reads, in one-letter code: Small ribosomal subunit protein uS2 (242 aa).

The protein belongs to the universal ribosomal protein uS2 family.

This is Small ribosomal subunit protein uS2 from Vibrio parahaemolyticus serotype O3:K6 (strain RIMD 2210633).